The primary structure comprises 241 residues: 1-(5-phosphoribosyl)-5-[(5-phosphoribosylamino)methylideneamino] imidazole-4-carboxamide isomerase (241 aa).

Aspartate 8 serves as the catalytic Proton acceptor. The Proton donor role is filled by aspartate 127.

The protein belongs to the HisA/HisF family.

Its subcellular location is the cytoplasm. The catalysed reaction is 1-(5-phospho-beta-D-ribosyl)-5-[(5-phospho-beta-D-ribosylamino)methylideneamino]imidazole-4-carboxamide = 5-[(5-phospho-1-deoxy-D-ribulos-1-ylimino)methylamino]-1-(5-phospho-beta-D-ribosyl)imidazole-4-carboxamide. It functions in the pathway amino-acid biosynthesis; L-histidine biosynthesis; L-histidine from 5-phospho-alpha-D-ribose 1-diphosphate: step 4/9. In Thermotoga petrophila (strain ATCC BAA-488 / DSM 13995 / JCM 10881 / RKU-1), this protein is 1-(5-phosphoribosyl)-5-[(5-phosphoribosylamino)methylideneamino] imidazole-4-carboxamide isomerase.